A 470-amino-acid chain; its full sequence is Siroheme synthase (470 aa).

Residues 1 to 203 are precorrin-2 dehydrogenase /sirohydrochlorin ferrochelatase; it reads MEFFPIFLKL…GDEAAARAEM (203 aa). NAD(+)-binding positions include 22–23 and 43–44; these read EV and PE. Phosphoserine is present on Ser128. The interval 216–470 is uroporphyrinogen-III C-methyltransferase; sequence GAVYLVGAGP…ENSAVTIQED (255 aa). Pro225 serves as a coordination point for S-adenosyl-L-methionine. Asp248 acts as the Proton acceptor in catalysis. Catalysis depends on Lys270, which acts as the Proton donor. S-adenosyl-L-methionine is bound by residues 301–303, Met383, and Ala412; that span reads GGD.

In the N-terminal section; belongs to the precorrin-2 dehydrogenase / sirohydrochlorin ferrochelatase family. It in the C-terminal section; belongs to the precorrin methyltransferase family.

The catalysed reaction is uroporphyrinogen III + 2 S-adenosyl-L-methionine = precorrin-2 + 2 S-adenosyl-L-homocysteine + H(+). It catalyses the reaction precorrin-2 + NAD(+) = sirohydrochlorin + NADH + 2 H(+). The enzyme catalyses siroheme + 2 H(+) = sirohydrochlorin + Fe(2+). It participates in cofactor biosynthesis; adenosylcobalamin biosynthesis; precorrin-2 from uroporphyrinogen III: step 1/1. Its pathway is cofactor biosynthesis; adenosylcobalamin biosynthesis; sirohydrochlorin from precorrin-2: step 1/1. The protein operates within porphyrin-containing compound metabolism; siroheme biosynthesis; precorrin-2 from uroporphyrinogen III: step 1/1. It functions in the pathway porphyrin-containing compound metabolism; siroheme biosynthesis; siroheme from sirohydrochlorin: step 1/1. It participates in porphyrin-containing compound metabolism; siroheme biosynthesis; sirohydrochlorin from precorrin-2: step 1/1. Its function is as follows. Multifunctional enzyme that catalyzes the SAM-dependent methylations of uroporphyrinogen III at position C-2 and C-7 to form precorrin-2 via precorrin-1. Then it catalyzes the NAD-dependent ring dehydrogenation of precorrin-2 to yield sirohydrochlorin. Finally, it catalyzes the ferrochelation of sirohydrochlorin to yield siroheme. This is Siroheme synthase from Chromobacterium violaceum (strain ATCC 12472 / DSM 30191 / JCM 1249 / CCUG 213 / NBRC 12614 / NCIMB 9131 / NCTC 9757 / MK).